The chain runs to 333 residues: Homeobox protein Hox-A1 (333 aa).

A disordered region spans residues 61-82 (ITSPHHHHHHHHHPQPATYQTS). The span at 64–74 (PHHHHHHHHHP) shows a compositional bias: basic residues. The interaction with OGT stretch occupies residues 74–202 (PQPATYQTSG…PASETSSPAQ (129 aa)). Thr152 carries O-linked (GlcNAc) threonine glycosylation. The short motif at 203 to 208 (TFDWMK) is the Antp-type hexapeptide element. The homeobox DNA-binding region spans 227–286 (QPNAVRTNFTTKQLTELEKEFHFNKYLTRARSEIAASLQLNETQVKIWFQNRRMKQKKRE). The interval 279-333 (RMKQKKREKEGLLPMSPATPPGSDEKTEESSEKSSSSPSAPSPASSTSDTLTTSH) is disordered. Basic and acidic residues predominate over residues 301–310 (SDEKTEESSE). The segment covering 311-333 (KSSSSPSAPSPASSTSDTLTTSH) has biased composition (low complexity).

The protein belongs to the Antp homeobox family. Labial subfamily. Interacts with OGT (via TPR repeats domain); the interaction takes place mainly in the nucleus. Forms a DNA-binding heterodimer with transcription factor PBX1. Post-translationally, glycosylated by OGT.

The protein resides in the nucleus. In terms of biological role, sequence-specific transcription factor. Regulates multiple developmental processes including brainstem, inner and outer ear, abducens nerve and cardiovascular development and morphogenesis as well as cognition and behavior. Also part of a developmental regulatory system that provides cells with specific positional identities on the anterior-posterior axis. Acts on the anterior body structures. Seems to act in the maintenance and/or generation of hindbrain segments. Activates transcription in the presence of PBX1A and PKNOX1. The sequence is that of Homeobox protein Hox-A1 (Hoxa1) from Rattus norvegicus (Rat).